The chain runs to 593 residues: Kelch-like protein 2 (593 aa).

Residues 1–29 are disordered; that stretch reads MESPPLPPACTKQGHQKPLDSKDENPEKH. Residues 17–29 show a composition bias toward basic and acidic residues; sequence KPLDSKDENPEKH. In terms of domain architecture, BTB spans 56-123; the sequence is CDVTIVAEDM…VYTAEIQVTE (68 aa). 6 Kelch repeats span residues 308–353, 354–400, 402–447, 449–496, 497–543, and 545–591; these read LMVV…YMAG, LVFA…VLNG, LYAV…VVGG, LYAV…VLNN, LLYA…AVNG, and LYVV…VIDK.

As to quaternary structure, component of the BCR(KLHL2) E3 ubiquitin ligase complex, at least composed of CUL3 and KLHL2 and RBX1. Binds actin. Interacts with KLHL12. Interacts (via N-terminus) with FYN (via SH3 domain). Detected in brain neurons, oligodendrocytes and astrocytes (at protein level).

Its subcellular location is the cytoplasm. It localises to the cytoskeleton. It is found in the cell projection. The protein localises to the ruffle. The protein resides in the lamellipodium. Its subcellular location is the cytosol. It functions in the pathway protein modification; protein ubiquitination. Its function is as follows. Substrate-specific adapter of a BCR (BTB-CUL3-RBX1) E3 ubiquitin ligase complex that mediates the ubiquitination of target proteins, such as NPTXR, WNK1, WNK3 and WNK4, leading most often to their proteasomal degradation. The BCR(KLHL2) complex catalyzes ubiquitination and degradation of NPTXR. Responsible for degradative ubiquitination of the WNK kinases WNK1, WNK3 and WNK4. Plays a role in the reorganization of the actin cytoskeleton. Promotes growth of cell projections in oligodendrocyte precursors. The chain is Kelch-like protein 2 from Rattus norvegicus (Rat).